The chain runs to 363 residues: Flagellar P-ring protein 2 (363 aa).

The signal sequence occupies residues 1 to 20 (MKLRTCCISLMLLLALPLQA).

The protein belongs to the FlgI family. In terms of assembly, the basal body constitutes a major portion of the flagellar organelle and consists of four rings (L,P,S, and M) mounted on a central rod.

Its subcellular location is the periplasm. It localises to the bacterial flagellum basal body. Assembles around the rod to form the L-ring and probably protects the motor/basal body from shearing forces during rotation. This Photobacterium profundum (strain SS9) protein is Flagellar P-ring protein 2.